The chain runs to 492 residues: Transmembrane protein 39B (492 aa).

Residues 1 to 53 (MGGRRGPNRTSYYRNPLCEPGSSGASGGGHSSSASVSSVRSRSRTTSGTGLSS) are disordered. N8 carries N-linked (GlcNAc...) asparagine glycosylation. Residues 31–53 (SSSASVSSVRSRSRTTSGTGLSS) are compositionally biased toward low complexity. The next 8 membrane-spanning stretches (helical) occupy residues 77 to 97 (SILFELQLFFCQLIALFVHYI), 115 to 135 (TSLNFHLIDFNLLMVTAIVLG), 153 to 175 (SLFRSILLFLTRFTVLTATGWSL), 185 to 205 (TYSFLNLLFLCYPFGMYIPFL), 288 to 308 (EVLVSSMLSAYYVAFVPVWFV), 322 to 342 (LFLLVSISTSVILMQHLLPAS), 421 to 441 (ILNILLLLEGAVIVYQLYSLM), and 447 to 467 (HQTISLALILFSNYYAFFKLL).

This sequence belongs to the TMEM39 family.

The protein resides in the endoplasmic reticulum membrane. May protect the cells against DNA damage caused by exposure to the cold-warming stress and facilitates tissue damage repair during the recovery phase. The polypeptide is Transmembrane protein 39B (Mus musculus (Mouse)).